A 477-amino-acid polypeptide reads, in one-letter code: Peroxisome proliferator-activated receptor gamma (477 aa).

A Phosphoserine; by MAPK modification is found at Ser87. The nuclear receptor DNA-binding region spans 110–184; sequence AIECRVCGDK…VGMSHNAIRF (75 aa). NR C4-type zinc fingers lie at residues 113–133 and 150–172; these read CRVCGDKASGFHYGVHACEGC and CDLNCRIHKKSRNKCQFCRFQKC. Residues 231-281 are disordered; it reads TKAKAPGHPDGQSHRQNSRGYTRHELADDGGGSDQGAVREPRAEQGGGDSN. Residues 252 to 475 form the NR LBD domain; it reads TRHELADDGG…HPLLQEIYKD (224 aa). Positions 467–475 match the 9aaTAD motif; the sequence is PLLQEIYKD.

This sequence belongs to the nuclear hormone receptor family. NR1 subfamily. As to quaternary structure, heterodimer with the retinoid X receptor. Expressed mainly in adipose tissue and kidney.

It is found in the nucleus. It localises to the cytoplasm. Functionally, receptor that binds peroxisome proliferators such as hypolipidemic drugs and fatty acids. Once activated by a ligand, the receptor binds to a promoter element in the gene for acyl-CoA oxidase and activates its transcription. It therefore controls the peroxisomal beta-oxidation pathway of fatty acids. Key regulator of adipocyte differentiation and glucose homeostasis. May play a role in the regulation of circadian rhythm. This is Peroxisome proliferator-activated receptor gamma (pparg) from Xenopus laevis (African clawed frog).